The primary structure comprises 467 residues: UBX domain-containing protein 7 (467 aa).

Position 2 is an N-acetylalanine (A2). Positions 2–54 constitute a UBA domain; it reads AAHGGSAASSALKGLIQQFTAITGASESVGKHMLEACNNNLEMAVTMFLDGGG. The tract at residues 57-77 is disordered; sequence EEPSTSSASVSTVRPHTEEEV. Over residues 59–70 the composition is skewed to polar residues; the sequence is PSTSSASVSTVR. Residues K84 and K112 each participate in a glycyl lysine isopeptide (Lys-Gly) (interchain with G-Cter in SUMO2) cross-link. Residues 240–260 form a disordered region; sequence GQLDGLSSSPPKKCARSESLI. Phosphoserine occurs at positions 256, 258, 263, and 266. The stretch at 263 to 282 is one ubiquitin-interacting motif (UIM) repeat; sequence SEDSQLEAAIRASLQETHFD. Residues 281-364 form a disordered region; that stretch reads FDSAQAKQDS…TATNHQGLPS (84 aa). Residues 330 to 344 are compositionally biased toward basic and acidic residues; the sequence is HKDLGHRKEENRRPL. The residue at position 373 (S373) is a Phosphoserine. In terms of domain architecture, UBX spans 386–463; the sequence is VNGPKAQLML…GLCPQETVFV (78 aa).

Interacts with neddylated CUL2, ubiquitinated HIF1A, and VCP/p97.

The protein resides in the nucleus. In terms of biological role, ubiquitin-binding adapter that links a subset of NEDD8-associated cullin ring ligases (CRLs) to the segregase VCP/p97, to regulate turnover of their ubiquitination substrates. This chain is UBX domain-containing protein 7 (Ubxn7), found in Mus musculus (Mouse).